The sequence spans 124 residues: Small ribosomal subunit protein uS12 (124 aa).

Aspartate 89 bears the 3-methylthioaspartic acid mark. Positions 104–124 (SAGVQNRNRGRSKYGTKRPKK) are disordered. A compositionally biased stretch (basic residues) spans 111 to 124 (NRGRSKYGTKRPKK).

This sequence belongs to the universal ribosomal protein uS12 family. In terms of assembly, part of the 30S ribosomal subunit. Contacts proteins S8 and S17. May interact with IF1 in the 30S initiation complex.

In terms of biological role, with S4 and S5 plays an important role in translational accuracy. Interacts with and stabilizes bases of the 16S rRNA that are involved in tRNA selection in the A site and with the mRNA backbone. Located at the interface of the 30S and 50S subunits, it traverses the body of the 30S subunit contacting proteins on the other side and probably holding the rRNA structure together. The combined cluster of proteins S8, S12 and S17 appears to hold together the shoulder and platform of the 30S subunit. The sequence is that of Small ribosomal subunit protein uS12 from Pelotomaculum thermopropionicum (strain DSM 13744 / JCM 10971 / SI).